Consider the following 251-residue polypeptide: Ubiquitin-conjugating enzyme E2 22 (251 aa).

One can recognise a UBC core domain in the interval 10-156 (NVIKQLAKEL…ARLYTGIHAK (147 aa)). The Glycyl thioester intermediate role is filled by Cys94. The span at 230–240 (GLAKVQADKKK) shows a compositional bias: basic and acidic residues. Positions 230–251 (GLAKVQADKKKVDARKKSLKRL) are disordered. Residues 230–251 (GLAKVQADKKKVDARKKSLKRL) are a coiled coil. Basic residues predominate over residues 241 to 251 (VDARKKSLKRL).

This sequence belongs to the ubiquitin-conjugating enzyme family. Post-translationally, self-ubiquitinated. Expressed in seeds, pistils, siliques, hypocotyls and leaves.

The enzyme catalyses S-ubiquitinyl-[E1 ubiquitin-activating enzyme]-L-cysteine + [E2 ubiquitin-conjugating enzyme]-L-cysteine = [E1 ubiquitin-activating enzyme]-L-cysteine + S-ubiquitinyl-[E2 ubiquitin-conjugating enzyme]-L-cysteine.. It participates in protein modification; protein ubiquitination. Functionally, accepts the ubiquitin from the E1 complex and catalyzes its covalent attachment to other proteins. The chain is Ubiquitin-conjugating enzyme E2 22 (UBC22) from Arabidopsis thaliana (Mouse-ear cress).